The sequence spans 713 residues: Acetyl-coenzyme A synthetase 1 (713 aa).

Residues 1–39 (MSPSAVQSSKLEEQSSEIDKLKAKMSQSAATAQQKKEHE) are disordered. Positions 10–22 (KLEEQSSEIDKLK) are enriched in basic and acidic residues. CoA is bound by residues 248 to 251 (RGGK) and T367. ATP contacts are provided by residues 443 to 445 (GEP), 467 to 472 (DTYWQT), D559, and R574. Positions 552–600 (PGYYFTGDGAAKDKDGYIWILGRVDDVVNVSGHRLSTAEIEAAIIEDPI) match the FACS motif. A CoA-binding site is contributed by S582. Residue R585 participates in ATP binding. R650 serves as a coordination point for CoA. The Microbody targeting signal motif lies at 711-713 (VKL).

This sequence belongs to the ATP-dependent AMP-binding enzyme family.

The protein localises to the microsome. It localises to the cytoplasm. The protein resides in the mitochondrion. It is found in the nucleus. It catalyses the reaction acetate + ATP + CoA = acetyl-CoA + AMP + diphosphate. Catalyzes the production of acetyl-CoA. Provides the acetyl-CoA source for histone acetylation in the nucleus. 'Aerobic' isozyme of acetyl-coenzyme A synthetase, which supports growth on nonfermentable carbon sources such as glycerol and ethanol. May be required for assimilation of ethanol and acetate. This chain is Acetyl-coenzyme A synthetase 1 (ACS1), found in Saccharomyces cerevisiae (strain ATCC 204508 / S288c) (Baker's yeast).